We begin with the raw amino-acid sequence, 271 residues long: Tryptophan synthase alpha chain (271 aa).

Active-site proton acceptor residues include glutamate 56 and aspartate 67.

It belongs to the TrpA family. As to quaternary structure, tetramer of two alpha and two beta chains.

It carries out the reaction (1S,2R)-1-C-(indol-3-yl)glycerol 3-phosphate + L-serine = D-glyceraldehyde 3-phosphate + L-tryptophan + H2O. It functions in the pathway amino-acid biosynthesis; L-tryptophan biosynthesis; L-tryptophan from chorismate: step 5/5. The alpha subunit is responsible for the aldol cleavage of indoleglycerol phosphate to indole and glyceraldehyde 3-phosphate. This chain is Tryptophan synthase alpha chain, found in Mycobacterium intracellulare.